We begin with the raw amino-acid sequence, 285 residues long: Cytosolic Fe-S cluster assembly factor CFD1 (285 aa).

30 to 37 provides a ligand contact to ATP; that stretch reads GKGGVGKS. The [4Fe-4S] cluster site is built by cysteine 206 and cysteine 209.

This sequence belongs to the Mrp/NBP35 ATP-binding proteins family. NUBP2/CFD1 subfamily. In terms of assembly, heterotetramer of 2 NBP35 and 2 CFD1 chains. [4Fe-4S] cluster is required as a cofactor.

It is found in the cytoplasm. Component of the cytosolic iron-sulfur (Fe/S) protein assembly (CIA) machinery. Required for maturation of extramitochondrial Fe-S proteins. The NBP35-CFD1 heterotetramer forms a Fe-S scaffold complex, mediating the de novo assembly of an Fe-S cluster and its transfer to target apoproteins. Required for biogenesis and export of both ribosomal subunits, which may reflect a role in assembly of the Fe/S clusters in RLI1, a protein which performs rRNA processing and ribosome export. This Candida glabrata (strain ATCC 2001 / BCRC 20586 / JCM 3761 / NBRC 0622 / NRRL Y-65 / CBS 138) (Yeast) protein is Cytosolic Fe-S cluster assembly factor CFD1.